The following is a 258-amino-acid chain: Aquaglyceroporin (258 aa).

Residues methionine 1–arginine 11 are Cytoplasmic-facing. Residues glutamate 12–alanine 32 traverse the membrane as a helical segment. The Extracellular segment spans residues asparagine 33–lysine 45. Residues leucine 46–glycine 66 traverse the membrane as a helical segment. The glycerol site is built by glycine 66, alanine 67, and asparagine 70. The Cytoplasmic segment spans residues alanine 67–lysine 87. Residues isoleucine 88 to glycine 108 form a helical membrane-spanning segment. At leucine 109 to threonine 135 the chain is on the extracellular side. Residue serine 127 participates in glycerol binding. Residues glycine 136 to valine 156 form a helical membrane-spanning segment. The Cytoplasmic portion of the chain corresponds to aspartate 157–serine 171. The helical transmembrane segment at valine 172–leucine 192 threads the bilayer. 4 residues coordinate glycerol: glycine 189, phenylalanine 190, asparagine 193, and arginine 196. Residues asparagine 193–asparagine 217 lie on the Extracellular side of the membrane. The chain crosses the membrane as a helical span at residues phenylalanine 218–tyrosine 238. Topologically, residues aspartate 239–leucine 258 are cytoplasmic.

It belongs to the MIP/aquaporin (TC 1.A.8) family. In terms of assembly, homotetramer.

It is found in the cell membrane. It catalyses the reaction H2O(in) = H2O(out). The enzyme catalyses glycerol(in) = glycerol(out). It carries out the reaction urea(in) = urea(out). The catalysed reaction is NH4(+)(in) = NH4(+)(out). It catalyses the reaction methylamine(out) = methylamine(in). The enzyme catalyses formamide(out) = formamide(in). In terms of biological role, mediates water and glycerol transport across the cell membrane. Permeable to sugar alcohols of up to five carbons and urea. Permeable to ammonia, methylamine and formamide. The polypeptide is Aquaglyceroporin (Plasmodium falciparum (isolate 3D7)).